Consider the following 931-residue polypeptide: Glycine dehydrogenase (decarboxylating) (931 aa).

An N6-(pyridoxal phosphate)lysine modification is found at Lys-684.

It belongs to the GcvP family. The glycine cleavage system is composed of four proteins: P, T, L and H. Pyridoxal 5'-phosphate is required as a cofactor.

The enzyme catalyses N(6)-[(R)-lipoyl]-L-lysyl-[glycine-cleavage complex H protein] + glycine + H(+) = N(6)-[(R)-S(8)-aminomethyldihydrolipoyl]-L-lysyl-[glycine-cleavage complex H protein] + CO2. Its function is as follows. The glycine cleavage system catalyzes the degradation of glycine. The P protein binds the alpha-amino group of glycine through its pyridoxal phosphate cofactor; CO(2) is released and the remaining methylamine moiety is then transferred to the lipoamide cofactor of the H protein. This chain is Glycine dehydrogenase (decarboxylating), found in Bartonella henselae (strain ATCC 49882 / DSM 28221 / CCUG 30454 / Houston 1) (Rochalimaea henselae).